The sequence spans 220 residues: Ribose-5-phosphate isomerase A (220 aa).

Substrate is bound by residues 28–31, 81–84, and 94–97; these read TGST, DGAD, and KGGG. Glu103 serves as the catalytic Proton acceptor. Lys121 is a substrate binding site.

It belongs to the ribose 5-phosphate isomerase family. Homodimer.

It carries out the reaction aldehydo-D-ribose 5-phosphate = D-ribulose 5-phosphate. It participates in carbohydrate degradation; pentose phosphate pathway; D-ribose 5-phosphate from D-ribulose 5-phosphate (non-oxidative stage): step 1/1. Its function is as follows. Catalyzes the reversible conversion of ribose-5-phosphate to ribulose 5-phosphate. The sequence is that of Ribose-5-phosphate isomerase A from Shewanella putrefaciens (strain CN-32 / ATCC BAA-453).